The sequence spans 78 residues: Apolipoprotein C-I (78 aa).

The first 26 residues, 1 to 26 (MRLILWLPVLVVVLLMVTEGPAPAQG), serve as a signal peptide directing secretion.

This sequence belongs to the apolipoprotein C1 family.

Its subcellular location is the secreted. In terms of biological role, inhibitor of lipoprotein binding to the low density lipoprotein (LDL) receptor, LDL receptor-related protein, and very low density lipoprotein (VLDL) receptor. Associates with high density lipoproteins (HDL) and the triacylglycerol-rich lipoproteins in the plasma and makes up about 10% of the protein of the VLDL and 2% of that of HDL. Appears to interfere directly with fatty acid uptake and is also the major plasma inhibitor of cholesteryl ester transfer protein (CETP). Binds free fatty acids and reduces their intracellular esterification. Modulates the interaction of APOE with beta-migrating VLDL and inhibits binding of beta-VLDL to the LDL receptor-related protein. The chain is Apolipoprotein C-I (APOC1) from Panthera tigris altaica (Siberian tiger).